Reading from the N-terminus, the 239-residue chain is Purine nucleoside phosphorylase DeoD-type (239 aa).

His-5 is an a purine D-ribonucleoside binding site. Phosphate is bound by residues Gly-21, Arg-25, Arg-44, and 88–91; that span reads RVGS. A purine D-ribonucleoside contacts are provided by residues 180–182 and 204–205; these read EME and SD. Catalysis depends on Asp-205, which acts as the Proton donor.

It belongs to the PNP/UDP phosphorylase family. As to quaternary structure, homohexamer; trimer of homodimers.

It carries out the reaction a purine D-ribonucleoside + phosphate = a purine nucleobase + alpha-D-ribose 1-phosphate. The catalysed reaction is a purine 2'-deoxy-D-ribonucleoside + phosphate = a purine nucleobase + 2-deoxy-alpha-D-ribose 1-phosphate. Its function is as follows. Catalyzes the reversible phosphorolytic breakdown of the N-glycosidic bond in the beta-(deoxy)ribonucleoside molecules, with the formation of the corresponding free purine bases and pentose-1-phosphate. This Pectobacterium atrosepticum (strain SCRI 1043 / ATCC BAA-672) (Erwinia carotovora subsp. atroseptica) protein is Purine nucleoside phosphorylase DeoD-type.